The chain runs to 119 residues: MPRVKRGVTARARHKKIIKLAKGYRGRRNNVYRIAKQAVMRAGQYAYRDRRNKKRVFRALWITRINAAVRQHDMTYSVFINGLKKASIELDRKVLADMAVFDKAAFAAIVQQVKAAVAA.

It belongs to the bacterial ribosomal protein bL20 family.

Binds directly to 23S ribosomal RNA and is necessary for the in vitro assembly process of the 50S ribosomal subunit. It is not involved in the protein synthesizing functions of that subunit. In Burkholderia ambifaria (strain MC40-6), this protein is Large ribosomal subunit protein bL20.